The chain runs to 938 residues: Leucine--tRNA ligase 1 (938 aa).

Residues 40-50 carry the 'HIGH' region motif; that stretch reads PYTNSPLHIGH. The 'KMSKS' region motif lies at 620–624; the sequence is KMSKS. Lys-623 provides a ligand contact to ATP.

It belongs to the class-I aminoacyl-tRNA synthetase family.

The protein resides in the cytoplasm. It catalyses the reaction tRNA(Leu) + L-leucine + ATP = L-leucyl-tRNA(Leu) + AMP + diphosphate. In Metallosphaera sedula (strain ATCC 51363 / DSM 5348 / JCM 9185 / NBRC 15509 / TH2), this protein is Leucine--tRNA ligase 1.